Reading from the N-terminus, the 400-residue chain is E3 ubiquitin-protein ligase RNF149 (400 aa).

Positions 1–32 (MAWRRREASVGARGVLALALLALALCVPGARG) are cleaved as a signal peptide. 2 N-linked (GlcNAc...) asparagine glycosylation sites follow: Asn-52 and Asn-145. The PA domain occupies 67-175 (SSPKEGAHGL…PKGREILELV (109 aa)). A helical transmembrane segment spans residues 201–221 (VVFVAIAFITMMIISLAWLIF). The segment at 269–310 (CAVCIENFKVKDIIRILPCKHIFHRICIDPWLLDHRTCPMCK) adopts an RING-type; atypical zinc-finger fold. A disordered region spans residues 325-400 (DVQEMPAPES…SDSRHGGPIS (76 aa)). Ser-345 carries the phosphoserine modification. Residues 356–368 (DSSPPSASPAESE) are compositionally biased toward low complexity. Residues 389 to 400 (GRSDSRHGGPIS) show a composition bias toward basic and acidic residues.

It localises to the membrane. It catalyses the reaction S-ubiquitinyl-[E2 ubiquitin-conjugating enzyme]-L-cysteine + [acceptor protein]-L-lysine = [E2 ubiquitin-conjugating enzyme]-L-cysteine + N(6)-ubiquitinyl-[acceptor protein]-L-lysine.. The protein operates within protein modification; protein ubiquitination. Its function is as follows. E3 ubiquitin-protein ligase. Ubiquitinates BRAF, inducing its proteasomal degradation. The polypeptide is E3 ubiquitin-protein ligase RNF149 (RNF149) (Homo sapiens (Human)).